A 160-amino-acid chain; its full sequence is Oligoribonuclease (160 aa).

The 151-residue stretch at 8–158 (LIWIDLEMTG…YNKLKKKTLI (151 aa)) folds into the Exonuclease domain. Residue Tyr129 is part of the active site.

This sequence belongs to the oligoribonuclease family.

It is found in the cytoplasm. 3'-to-5' exoribonuclease specific for small oligoribonucleotides. The chain is Oligoribonuclease (orn) from Buchnera aphidicola subsp. Baizongia pistaciae (strain Bp).